A 44-amino-acid chain; its full sequence is ATITVVNRCSYTVWPGALPGGGVRLDPGQRWALNMPAGTAGAAV.

The protein belongs to the thaumatin family.

Functionally, has antifungal activity. Inhibits the growth of Trichoderma viridae and Candida albicans. This Hordeum vulgare (Barley) protein is Antifungal protein R.